A 237-amino-acid chain; its full sequence is Orotidine 5'-phosphate decarboxylase (237 aa).

Substrate contacts are provided by residues D10, K33, D60–T69, T124, R186, Q195, G215, and R216. The Proton donor role is filled by K62.

It belongs to the OMP decarboxylase family. Type 1 subfamily. In terms of assembly, homodimer.

The catalysed reaction is orotidine 5'-phosphate + H(+) = UMP + CO2. The protein operates within pyrimidine metabolism; UMP biosynthesis via de novo pathway; UMP from orotate: step 2/2. Its function is as follows. Catalyzes the decarboxylation of orotidine 5'-monophosphate (OMP) to uridine 5'-monophosphate (UMP). The chain is Orotidine 5'-phosphate decarboxylase from Lactiplantibacillus plantarum (strain ATCC BAA-793 / NCIMB 8826 / WCFS1) (Lactobacillus plantarum).